Consider the following 631-residue polypeptide: MAAQRGMPSSAVRVLEEALGMGLTAAGDARDTADAVAAEGAYYLEQVTITEASEDDYEYEEIPDDNFSIPEGEEDLAKAIQMAQEQATDTEILERKTVLPSKHAVPEVIEDFLCNFLIKMGMTRTLDCFQSEWYELIQKGVTELRTVGNVPDVYTQIMLLENENKNLKKDLKHYKQAADKAREDLLKIQKERDFHRMHHKRIVQEKNKLINDLKGLKLHYASYEPTIRVLHEKHHTLLKEKMLTSLERDKVVGQISGLQETLKKLQRGHSYHGPQIKVDHSREKENAPEGPTQKGLREAREQNKCKTKMKGNTKDSEFPIDMQPNPNLNVSKESLSPAKFDYKLKNIFRLHELPVSCVSMQPHKDILVSCGEDRLWKVLGLPKCNVLLTGFGHTDWLSDCCFHPSGDKLATSSGDTTVKLWDLCKGDCILTFEGHSRAVWSCTWHSCGNFVASSSLDKTSKIWDVNSERCRCTLYGHTDSVNSIEFFPFSNTLLTSSADKTLSIWDARTGICEQSLYGHMHSINDAIFDPRGHMIASCDACGVTKLWDFRKLLPIVSIDIGPSPGNEVNFDSSGRVLAQASGNGVIHLLDLKSGEIHKLMGHENEAHTVVFSHDGEILFSGGSDGTVRTWS.

Residues D152–R267 are a coiled coil. Residues Q266–K332 form a disordered region. Basic and acidic residues-rich tracts occupy residues K277–A287 and G295–K304. WD repeat units lie at residues L350–T389, G392–T431, G434–T473, G476–S515, G518–S557, I560–M600, and G601–W630.

In terms of assembly, interacts with SPAG6 and STK36. Phosphorylated by TSSK2. As to expression, isoform 1 is detected in testis. Isoform 4 is detected in testis and brain, and at lower levels in kidney, heart, pancreas, thyroid, ovary, adrenal gland, spinal cord, trachea and liver.

Its subcellular location is the cytoplasm. The protein resides in the cytoskeleton. The protein localises to the flagellum axoneme. It localises to the cilium axoneme. It is found in the cell projection. Its subcellular location is the cilium. The protein resides in the flagellum. Necessary for sperm flagellar function. Plays a role in motile ciliogenesis. May help to recruit STK36 to the cilium or apical surface of the cell to initiate subsequent steps of construction of the central pair apparatus of motile cilia. The polypeptide is Sperm-associated antigen 16 protein (SPAG16) (Homo sapiens (Human)).